A 220-amino-acid chain; its full sequence is Ribosome maturation factor RimM (220 aa).

A PRC barrel domain is found at 143-220; sequence EGEFYWVDLI…RIVVDWGLDY (78 aa).

It belongs to the RimM family. In terms of assembly, binds ribosomal protein uS19.

Its subcellular location is the cytoplasm. Functionally, an accessory protein needed during the final step in the assembly of 30S ribosomal subunit, possibly for assembly of the head region. Essential for efficient processing of 16S rRNA. May be needed both before and after RbfA during the maturation of 16S rRNA. It has affinity for free ribosomal 30S subunits but not for 70S ribosomes. The chain is Ribosome maturation factor RimM from Cupriavidus metallidurans (strain ATCC 43123 / DSM 2839 / NBRC 102507 / CH34) (Ralstonia metallidurans).